The following is a 120-amino-acid chain: MKILFVLISILHAVYCFSSEEDVDSAYLANELEPVEDINSEQYAALEPKEEHERSCADMGQDCKDDCDCCLNIATCNCWFGRYFCSCTFGDYQTCLRKKGKCKRNRPQSCPRSNLNRKKG.

Positions 1-16 (MKILFVLISILHAVYC) are cleaved as a signal peptide. Residues 17–54 (FSSEEDVDSAYLANELEPVEDINSEQYAALEPKEEHER) constitute a propeptide that is removed on maturation. 4 disulfides stabilise this stretch: cysteine 56–cysteine 70, cysteine 63–cysteine 76, cysteine 69–cysteine 87, and cysteine 78–cysteine 85. The region spanning 56 to 95 (CADMGQDCKDDCDCCLNIATCNCWFGRYFCSCTFGDYQTC) is the Agouti domain.

It belongs to the neurotoxin 05 (agouti) family. In terms of processing, contains 6 disulfide bonds. As to expression, expressed by the venom gland.

Its subcellular location is the secreted. This Lycosa singoriensis (Wolf spider) protein is U13-lycotoxin-Ls1a.